Reading from the N-terminus, the 425-residue chain is Tryptophan synthase beta chain (425 aa).

An N6-(pyridoxal phosphate)lysine modification is found at lysine 107.

The protein belongs to the TrpB family. As to quaternary structure, tetramer of two alpha and two beta chains. The cofactor is pyridoxal 5'-phosphate.

The catalysed reaction is (1S,2R)-1-C-(indol-3-yl)glycerol 3-phosphate + L-serine = D-glyceraldehyde 3-phosphate + L-tryptophan + H2O. It functions in the pathway amino-acid biosynthesis; L-tryptophan biosynthesis; L-tryptophan from chorismate: step 5/5. In terms of biological role, the beta subunit is responsible for the synthesis of L-tryptophan from indole and L-serine. The chain is Tryptophan synthase beta chain from Synechococcus sp. (strain JA-2-3B'a(2-13)) (Cyanobacteria bacterium Yellowstone B-Prime).